We begin with the raw amino-acid sequence, 736 residues long: Subtilisin-like protease SBT4.12 (736 aa).

Residues 1-24 (MANLAASTCLYSWLLVLLLSSVSA) form the signal peptide. Residues 25–110 (IIDEDTQVYI…VFPNKILQLH (86 aa)) constitute a propeptide, activation peptide. Residues 32–110 (VYIVYMGSLS…VFPNKILQLH (79 aa)) form the Inhibitor I9 domain. Residues 114–580 (SWDFMGVKEG…AGHVDPMAAL (467 aa)) enclose the Peptidase S8 domain. D142 functions as the Charge relay system in the catalytic mechanism. N173 carries an N-linked (GlcNAc...) asparagine glycan. H197 acts as the Charge relay system in catalysis. N-linked (GlcNAc...) asparagine glycosylation is found at N220, N381, and N459. Positions 353–437 (KYPLVYGKSA…GLKAKDFKSL (85 aa)) constitute a PA domain. The Charge relay system role is filled by S519. 3 N-linked (GlcNAc...) asparagine glycosylation sites follow: N601, N649, and N659.

This sequence belongs to the peptidase S8 family. Post-translationally, the C-terminal propeptide is autocleaved. In terms of tissue distribution, specifically expressed in root stele of the root hair zone.

It localises to the secreted. This Arabidopsis thaliana (Mouse-ear cress) protein is Subtilisin-like protease SBT4.12.